Reading from the N-terminus, the 31-residue chain is Cytochrome b6-f complex subunit 6 (31 aa).

Residues 4–24 (LTSYFGFLLAALTITFVLFIG) form a helical membrane-spanning segment.

Belongs to the PetL family. The 4 large subunits of the cytochrome b6-f complex are cytochrome b6, subunit IV (17 kDa polypeptide, PetD), cytochrome f and the Rieske protein, while the 4 small subunits are PetG, PetL, PetM and PetN. The complex functions as a dimer.

It localises to the plastid. The protein resides in the chloroplast thylakoid membrane. Functionally, component of the cytochrome b6-f complex, which mediates electron transfer between photosystem II (PSII) and photosystem I (PSI), cyclic electron flow around PSI, and state transitions. PetL is important for photoautotrophic growth as well as for electron transfer efficiency and stability of the cytochrome b6-f complex. This is Cytochrome b6-f complex subunit 6 from Oxybasis rubra (Red goosefoot).